We begin with the raw amino-acid sequence, 146 residues long: Hemoglobin subunit beta-2 (146 aa).

A Globin domain is found at 2–146; the sequence is EWTNFERATI…VVSSLGKQYH (145 aa). Positions 63 and 92 each coordinate heme b.

The protein belongs to the globin family. In terms of assembly, hb2 is a heterotetramer of two alpha chains and two beta-2 chains. As to expression, red blood cells.

In terms of biological role, involved in oxygen transport from gills to the various peripheral tissues. The polypeptide is Hemoglobin subunit beta-2 (hbb2) (Cygnodraco mawsoni (Antarctic dragonfish)).